The following is a 385-amino-acid chain: 1-deoxy-D-xylulose 5-phosphate reductoisomerase (385 aa).

Residues threonine 13, glycine 14, serine 15, isoleucine 16, asparagine 40, and asparagine 122 each contribute to the NADPH site. Residue lysine 123 coordinates 1-deoxy-D-xylulose 5-phosphate. Glutamate 124 lines the NADPH pocket. Aspartate 148 lines the Mn(2+) pocket. The 1-deoxy-D-xylulose 5-phosphate site is built by serine 149, glutamate 150, serine 177, and histidine 200. Position 150 (glutamate 150) interacts with Mn(2+). Glycine 206 is a binding site for NADPH. Serine 213, asparagine 218, lysine 219, and glutamate 222 together coordinate 1-deoxy-D-xylulose 5-phosphate. Residue glutamate 222 coordinates Mn(2+).

The protein belongs to the DXR family. The cofactor is Mg(2+). Mn(2+) is required as a cofactor.

It carries out the reaction 2-C-methyl-D-erythritol 4-phosphate + NADP(+) = 1-deoxy-D-xylulose 5-phosphate + NADPH + H(+). Its pathway is isoprenoid biosynthesis; isopentenyl diphosphate biosynthesis via DXP pathway; isopentenyl diphosphate from 1-deoxy-D-xylulose 5-phosphate: step 1/6. In terms of biological role, catalyzes the NADPH-dependent rearrangement and reduction of 1-deoxy-D-xylulose-5-phosphate (DXP) to 2-C-methyl-D-erythritol 4-phosphate (MEP). The sequence is that of 1-deoxy-D-xylulose 5-phosphate reductoisomerase from Francisella tularensis subsp. novicida (strain U112).